Reading from the N-terminus, the 250-residue chain is 3alpha-hydroxysteroid dehydrogenase (250 aa).

NADP(+) is bound by residues N93, Y158, and K162. Y158 functions as the Proton acceptor in the catalytic mechanism.

It belongs to the short-chain dehydrogenases/reductases (SDR) family.

It catalyses the reaction lithocholate + NADP(+) = 3-oxo-5beta-cholan-24-oate + NADPH + H(+). The catalysed reaction is deoxycholate + NADP(+) = 12alpha-hydroxy-3-oxo-5beta-cholan-24-oate + NADPH + H(+). It carries out the reaction deoxycholate + NAD(+) = 12alpha-hydroxy-3-oxo-5beta-cholan-24-oate + NADH + H(+). The enzyme catalyses cholate + NADP(+) = 7alpha,12alpha-dihydroxy-3-oxo-5beta-cholan-24-oate + NADPH + H(+). It catalyses the reaction chenodeoxycholate + NADP(+) = 3-oxochenodeoxycholate + NADPH + H(+). Its function is as follows. Involved in the modification of secondary bile acids into iso-bile acids (3beta-bile acids) via epimerization of the 3-OH group through a 3-oxo-intermediate. Catalyzes the oxidation of deoxycholate (DCA) and lithocholate (LCA) to yield 12-alpha-hydroxy-3-oxo-5-beta-cholan-24-oate (3-oxo-DCA) and 3-oxo-5-beta-cholan-24-oate (3-oxo-LCA), respectively. Is also able to catalyze the oxidation of cholate (CA) and chenodeoxycholate (CDCA) into 3-dehydrocholate (3-oxo-CA) and 7-alpha-hydroxy-3-oxo-5-beta-cholan-24-oate (3-oxo-CDCA), respectively. Can also catalyze the reverse reactions in vitro. Accepts both NADPH and NADH as cosubstrates. The conversion of the abundant bile acid DCA into isoDCA by the gut bacterium R.gnavus favors the growth of the keystone commensal genus Bacteroides, since isoDCA is less cytotoxic than its parent compound, DCA; iso-bile acids have thus a potential role in modulating gut community composition. The sequence is that of 3alpha-hydroxysteroid dehydrogenase from Mediterraneibacter gnavus (strain ATCC 29149 / DSM 114966 / JCM 6515 / VPI C7-9) (Ruminococcus gnavus).